We begin with the raw amino-acid sequence, 396 residues long: Phosphoglycerate kinase (396 aa).

Residues 21 to 23 (DFN), arginine 36, 59 to 62 (HLGR), arginine 118, and arginine 151 contribute to the substrate site. ATP is bound by residues lysine 201, glycine 292, glutamate 323, and 349–352 (GGDS).

Belongs to the phosphoglycerate kinase family. Monomer.

The protein localises to the cytoplasm. It catalyses the reaction (2R)-3-phosphoglycerate + ATP = (2R)-3-phospho-glyceroyl phosphate + ADP. It functions in the pathway carbohydrate degradation; glycolysis; pyruvate from D-glyceraldehyde 3-phosphate: step 2/5. This is Phosphoglycerate kinase from Leptospira interrogans serogroup Icterohaemorrhagiae serovar copenhageni (strain Fiocruz L1-130).